Here is a 325-residue protein sequence, read N- to C-terminus: Ribosomal RNA small subunit methyltransferase C (325 aa).

It belongs to the methyltransferase superfamily. RsmC family. Monomer.

It is found in the cytoplasm. The enzyme catalyses guanosine(1207) in 16S rRNA + S-adenosyl-L-methionine = N(2)-methylguanosine(1207) in 16S rRNA + S-adenosyl-L-homocysteine + H(+). Specifically methylates the guanine in position 1207 of 16S rRNA in the 30S particle. In Alcanivorax borkumensis (strain ATCC 700651 / DSM 11573 / NCIMB 13689 / SK2), this protein is Ribosomal RNA small subunit methyltransferase C.